Here is a 461-residue protein sequence, read N- to C-terminus: Tumor necrosis factor receptor superfamily member 1A (461 aa).

Residues M1–G29 form the signal peptide. At L30 to A211 the chain is on the extracellular side. 4 TNFR-Cys repeats span residues L43–E82, V83–C125, G126–C166, and N167–L196. 12 disulfides stabilise this stretch: C44–C58, C59–C72, C62–C81, C84–C99, C102–C117, C105–C125, C127–C143, C146–C158, C149–C166, C168–C179, C182–C195, and C185–C191. The N-linked (GlcNAc...) asparagine glycan is linked to N54. N151 is a glycosylation site (N-linked (GlcNAc...) asparagine). The N-linked (GlcNAc...) asparagine glycan is linked to N201. Residues V212 to C234 traverse the membrane as a helical segment. Topologically, residues R235–R461 are cytoplasmic. The tract at residues V344–Q354 is N-SMase activation domain (NSD). In terms of domain architecture, Death spans P363–L448.

As to quaternary structure, binding of TNF to the extracellular domain leads to homotrimerization. The aggregated death domains provide a novel molecular interface that interacts specifically with the death domain of TRADD. Various TRADD-interacting proteins such as TRAFS, RIPK1 and possibly FADD, are recruited to the complex by their association with TRADD. This complex activates at least two distinct signaling cascades, apoptosis and NF-kappa-B signaling. Interacts with BAG4, BABAM2, FEM1B, GRB2, SQSTM1 and TRPC4AP. Interacts with DAB2IP. Interacts directly with NOL3 (via CARD domain); inhibits TNF-signaling pathway. Interacts with SH3RF2, TRADD and RIPK1. SH3RF2 facilitates the recruitment of RIPK1 and TRADD to TNFRSF1A in a TNF-alpha-dependent process. Interacts with PGLYRP1; this interaction is important for cell death induction. Interacts (via death domain) with MADD (via death domain).

The protein resides in the cell membrane. It localises to the golgi apparatus membrane. Its function is as follows. Receptor for TNFSF2/TNF-alpha and homotrimeric TNFSF1/lymphotoxin-alpha. The adapter molecule FADD recruits caspase-8 to the activated receptor. The resulting death-inducing signaling complex (DISC) performs caspase-8 proteolytic activation which initiates the subsequent cascade of caspases (aspartate-specific cysteine proteases) mediating apoptosis. In Rattus norvegicus (Rat), this protein is Tumor necrosis factor receptor superfamily member 1A (Tnfrsf1a).